The sequence spans 272 residues: Soluble interferon gamma receptor OPG193 (272 aa).

A signal peptide spans Met1–Asn13. Residues Asn42, Asn150, and Asn267 are each glycosylated (N-linked (GlcNAc...) asparagine; by host).

This sequence belongs to the type II cytokine receptor family. In terms of assembly, homodimer. Interacts with host IFNG.

The protein resides in the secreted. Functionally, counteracts the antiviral effects of host IFN-gamma. Acts as a soluble IFN-gamma receptor and thus inhibits the interaction between host IFN-gamma and its receptor. The chain is Soluble interferon gamma receptor OPG193 (OPG193) from Bos taurus (Bovine).